Consider the following 184-residue polypeptide: ATP synthase subunit b, chloroplastic (184 aa).

A helical transmembrane segment spans residues 27-49 (LATNPINLSVVLGVLIFFGKGVL).

It belongs to the ATPase B chain family. As to quaternary structure, F-type ATPases have 2 components, F(1) - the catalytic core - and F(0) - the membrane proton channel. F(1) has five subunits: alpha(3), beta(3), gamma(1), delta(1), epsilon(1). F(0) has four main subunits: a(1), b(1), b'(1) and c(10-14). The alpha and beta chains form an alternating ring which encloses part of the gamma chain. F(1) is attached to F(0) by a central stalk formed by the gamma and epsilon chains, while a peripheral stalk is formed by the delta, b and b' chains.

The protein localises to the plastid. It is found in the chloroplast thylakoid membrane. Functionally, f(1)F(0) ATP synthase produces ATP from ADP in the presence of a proton or sodium gradient. F-type ATPases consist of two structural domains, F(1) containing the extramembraneous catalytic core and F(0) containing the membrane proton channel, linked together by a central stalk and a peripheral stalk. During catalysis, ATP synthesis in the catalytic domain of F(1) is coupled via a rotary mechanism of the central stalk subunits to proton translocation. In terms of biological role, component of the F(0) channel, it forms part of the peripheral stalk, linking F(1) to F(0). The chain is ATP synthase subunit b, chloroplastic from Atropa belladonna (Belladonna).